The chain runs to 593 residues: Probable tripeptidyl-peptidase SED3 (593 aa).

An N-terminal signal peptide occupies residues 1–18 (MLLRWHSVIPLFLAMTVA). The propeptide at 19 to 198 (FPNTYRTVVE…NLQAIYLSTN (180 aa)) is removed in mature form. Residues Asn204, Asn261, and Asn275 are each glycosylated (N-linked (GlcNAc...) asparagine). In terms of domain architecture, Peptidase S53 spans 206-592 (TITPRCLREL…RILAKIVQHM (387 aa)). Residues Glu282 and Asp286 each act as charge relay system in the active site. The N-linked (GlcNAc...) asparagine glycan is linked to Asn295. Catalysis depends on Ser496, which acts as the Charge relay system. Ca(2+)-binding residues include Asp538 and Ile539. 2 N-linked (GlcNAc...) asparagine glycosylation sites follow: Asn554 and Asn566. Gly570 and Asp572 together coordinate Ca(2+).

It depends on Ca(2+) as a cofactor.

Its subcellular location is the secreted. It is found in the extracellular space. The enzyme catalyses Release of an N-terminal tripeptide from a polypeptide.. Its function is as follows. Secreted tripeptidyl-peptidase which degrades proteins at acidic pHs and is involved in virulence. This Arthroderma benhamiae (strain ATCC MYA-4681 / CBS 112371) (Trichophyton mentagrophytes) protein is Probable tripeptidyl-peptidase SED3 (SED3).